The primary structure comprises 408 residues: tRNA(Met) cytidine acetate ligase (408 aa).

ATP is bound by residues 7 to 20 (IVEY…HKYH), G102, N170, and 195 to 196 (RI).

It belongs to the TmcAL family.

It localises to the cytoplasm. The enzyme catalyses cytidine(34) in elongator tRNA(Met) + acetate + ATP = N(4)-acetylcytidine(34) in elongator tRNA(Met) + AMP + diphosphate. In terms of biological role, catalyzes the formation of N(4)-acetylcytidine (ac(4)C) at the wobble position of elongator tRNA(Met), using acetate and ATP as substrates. First activates an acetate ion to form acetyladenylate (Ac-AMP) and then transfers the acetyl group to tRNA to form ac(4)C34. The chain is tRNA(Met) cytidine acetate ligase from Clostridium kluyveri (strain NBRC 12016).